The following is a 399-amino-acid chain: Tyrosine--tRNA ligase (399 aa).

The 'HIGH' region signature appears at 42-51 (PTAPDLHLGH). A 'KMSKS' region motif is present at residues 226-230 (KMSKS). Lys-229 is an ATP binding site. The region spanning 336–396 (MPIAAVLNKA…GRKAFARITL (61 aa)) is the S4 RNA-binding domain.

Belongs to the class-I aminoacyl-tRNA synthetase family. TyrS type 2 subfamily. Homodimer.

The protein resides in the cytoplasm. It carries out the reaction tRNA(Tyr) + L-tyrosine + ATP = L-tyrosyl-tRNA(Tyr) + AMP + diphosphate + H(+). Catalyzes the attachment of tyrosine to tRNA(Tyr) in a two-step reaction: tyrosine is first activated by ATP to form Tyr-AMP and then transferred to the acceptor end of tRNA(Tyr). In Pseudomonas fluorescens (strain ATCC BAA-477 / NRRL B-23932 / Pf-5), this protein is Tyrosine--tRNA ligase.